A 161-amino-acid polypeptide reads, in one-letter code: UPF0262 protein Rru_A2770 (161 aa).

It belongs to the UPF0262 family.

The sequence is that of UPF0262 protein Rru_A2770 from Rhodospirillum rubrum (strain ATCC 11170 / ATH 1.1.1 / DSM 467 / LMG 4362 / NCIMB 8255 / S1).